Consider the following 20-residue polypeptide: Cytosol aminopeptidase (20 aa).

Position 6 is a phosphoserine (S6).

It belongs to the peptidase M17 family. In terms of assembly, homohexamer. Zn(2+) serves as cofactor. The cofactor is Mn(2+).

It is found in the cytoplasm. The catalysed reaction is Release of an N-terminal amino acid, Xaa-|-Yaa-, in which Xaa is preferably Leu, but may be other amino acids including Pro although not Arg or Lys, and Yaa may be Pro. Amino acid amides and methyl esters are also readily hydrolyzed, but rates on arylamides are exceedingly low.. It catalyses the reaction an S-substituted L-cysteinylglycine + H2O = an S-substituted L-cysteine + glycine. It carries out the reaction L-cysteinylglycine + H2O = L-cysteine + glycine. The enzyme catalyses S-benzyl-L-cysteinylglycine + H2O = S-benzyl-L-cysteine + glycine. The catalysed reaction is Release of N-terminal proline from a peptide.. Cytosolic metallopeptidase that catalyzes the removal of unsubstituted N-terminal hydrophobic amino acids from various peptides. The presence of Zn(2+) ions is essential for the peptidase activity, and the association with other cofactors can modulate the substrate spectificity of the enzyme. For instance, in the presence of Mn(2+), it displays a specific Cys-Gly hydrolyzing activity of Cys-Gly-S-conjugates. Involved in the metabolism of glutathione and in the degradation of glutathione S-conjugates, which may play a role in the control of the cell redox status. This is Cytosol aminopeptidase from Mesocricetus auratus (Golden hamster).